We begin with the raw amino-acid sequence, 309 residues long: RNA-binding protein with serine-rich domain 1 (309 aa).

2 stretches are compositionally biased toward basic and acidic residues: residues 1–17 (MAAT…DLRR) and 35–61 (ERSE…DRGR). 2 disordered regions span residues 1-166 (MAAT…PTKV) and 249-309 (AMPR…NSSR). Low complexity predominate over residues 70–129 (ASSGSSSSSRSRSSSSSSSSSGSSSGSSSGSSSSSASSRSGSSSSSRSSSSSSSSGSPSP). Basic residues-rich tracts occupy residues 130-146 (SRRR…KSKQ), 154-166 (RKRR…PTKV), and 270-302 (SPPR…HRSR). An RRM domain is found at 164–243 (TKVHIGRLTR…QEITASAVLT (80 aa)).

Belongs to the splicing factor SR family. Component of the active spliceosome.

It localises to the nucleus. The protein resides in the nucleus speckle. Its subcellular location is the cytoplasm. In terms of biological role, component of a splicing-dependent multiprotein exon junction complex (EJC) deposited at splice junction on mRNAs. The EJC is a dynamic structure consisting of a few core proteins and several more peripheral nuclear and cytoplasmic associated factors that join the complex only transiently either during EJC assembly or during subsequent mRNA metabolism. Putative component of the spliceosome which enhances the formation of the ATP-dependent A complex of the spliceosome. May participate in mRNA 3'-end cleavage. Also mediates increase of mRNA abundance and translational efficiency. This chain is RNA-binding protein with serine-rich domain 1 (rnps1), found in Xenopus tropicalis (Western clawed frog).